The following is a 198-amino-acid chain: Transcriptional regulator GfcR (198 aa).

This sequence belongs to the purine/pyrimidine phosphoribosyltransferase family. GfcR subfamily.

The sequence is that of Transcriptional regulator GfcR from Methanosphaera stadtmanae (strain ATCC 43021 / DSM 3091 / JCM 11832 / MCB-3).